Here is a 120-residue protein sequence, read N- to C-terminus: Large ribosomal subunit protein bL17 (120 aa).

Belongs to the bacterial ribosomal protein bL17 family. In terms of assembly, part of the 50S ribosomal subunit. Contacts protein L32.

This is Large ribosomal subunit protein bL17 from Geobacillus thermodenitrificans (strain NG80-2).